The following is a 171-amino-acid chain: Lipoprotein signal peptidase (171 aa).

The next 4 helical transmembrane spans lie at 15–35 (WLWL…IVMD), 47–67 (VLPF…SFLS), 72–92 (WQRW…AYWM), and 107–127 (ALII…GFVV). Residues aspartate 128 and aspartate 146 contribute to the active site. Residues 141–161 (AFNLADSTICIGAAMIILDGF) traverse the membrane as a helical segment.

Belongs to the peptidase A8 family.

The protein resides in the cell inner membrane. The catalysed reaction is Release of signal peptides from bacterial membrane prolipoproteins. Hydrolyzes -Xaa-Yaa-Zaa-|-(S,diacylglyceryl)Cys-, in which Xaa is hydrophobic (preferably Leu), and Yaa (Ala or Ser) and Zaa (Gly or Ala) have small, neutral side chains.. The protein operates within protein modification; lipoprotein biosynthesis (signal peptide cleavage). This protein specifically catalyzes the removal of signal peptides from prolipoproteins. This is Lipoprotein signal peptidase from Vibrio cholerae serotype O1 (strain ATCC 39541 / Classical Ogawa 395 / O395).